A 247-amino-acid chain; its full sequence is Eukaryotic translation initiation factor 3 subunit J (247 aa).

2 disordered regions span residues 1 to 64 (MADW…KTLK) and 77 to 101 (EEKR…EEQM). A compositionally biased stretch (acidic residues) spans 24-45 (EGEDEDDDIKESWDDDDEDEKK). Positions 43–108 (EKKEDEAKNT…EQMAEKLRRQ (66 aa)) form a coiled coil.

This sequence belongs to the eIF-3 subunit J family. As to quaternary structure, component of the eukaryotic translation initiation factor 3 (eIF-3) complex.

The protein localises to the cytoplasm. Functionally, component of the eukaryotic translation initiation factor 3 (eIF-3) complex, which is involved in protein synthesis of a specialized repertoire of mRNAs and, together with other initiation factors, stimulates binding of mRNA and methionyl-tRNAi to the 40S ribosome. The eIF-3 complex specifically targets and initiates translation of a subset of mRNAs involved in cell proliferation. The chain is Eukaryotic translation initiation factor 3 subunit J from Nematostella vectensis (Starlet sea anemone).